The chain runs to 236 residues: Transcriptional activator protein SolR (236 aa).

Residues 169–234 (VPESNAVLTT…QAVVKAIATG (66 aa)) form the HTH luxR-type domain. A DNA-binding region (H-T-H motif) is located at residues 193–212 (AYEIGQILRISERTVNFHVN).

Belongs to the autoinducer-regulated transcriptional regulatory protein family.

The chain is Transcriptional activator protein SolR (solR) from Ralstonia solanacearum (Pseudomonas solanacearum).